The primary structure comprises 122 residues: Small ribosomal subunit protein uS13 (122 aa).

Residues 94 to 122 are disordered; it reads LSLPVRGQRTKTNSRTRKGKRKTVAGKKK. Residues 101-122 are compositionally biased toward basic residues; the sequence is QRTKTNSRTRKGKRKTVAGKKK.

Belongs to the universal ribosomal protein uS13 family. As to quaternary structure, part of the 30S ribosomal subunit. Forms a loose heterodimer with protein S19. Forms two bridges to the 50S subunit in the 70S ribosome.

Functionally, located at the top of the head of the 30S subunit, it contacts several helices of the 16S rRNA. In the 70S ribosome it contacts the 23S rRNA (bridge B1a) and protein L5 of the 50S subunit (bridge B1b), connecting the 2 subunits; these bridges are implicated in subunit movement. Contacts the tRNAs in the A and P-sites. In Chlamydia trachomatis serovar A (strain ATCC VR-571B / DSM 19440 / HAR-13), this protein is Small ribosomal subunit protein uS13.